The sequence spans 431 residues: Adenylosuccinate synthetase (431 aa).

GTP is bound by residues glycine 12–lysine 18 and glycine 40–threonine 42. The active-site Proton acceptor is aspartate 13. 2 residues coordinate Mg(2+): aspartate 13 and glycine 40. IMP-binding positions include aspartate 13–lysine 16, asparagine 38–histidine 41, threonine 129, arginine 143, glutamine 224, and threonine 239. The active-site Proton donor is the histidine 41. Residue lysine 292 forms an Isoglutamyl lysine isopeptide (Lys-Gln) (interchain with Q-Cter in protein Pup) linkage. Valine 299–arginine 305 contacts substrate. Position 303 (arginine 303) interacts with IMP. GTP is bound by residues arginine 305, lysine 331 to aspartate 333, and glycine 413 to glycine 415.

Belongs to the adenylosuccinate synthetase family. As to quaternary structure, homodimer. Mg(2+) is required as a cofactor.

Its subcellular location is the cytoplasm. The catalysed reaction is IMP + L-aspartate + GTP = N(6)-(1,2-dicarboxyethyl)-AMP + GDP + phosphate + 2 H(+). It participates in purine metabolism; AMP biosynthesis via de novo pathway; AMP from IMP: step 1/2. In terms of biological role, plays an important role in the de novo pathway of purine nucleotide biosynthesis. Catalyzes the first committed step in the biosynthesis of AMP from IMP. The sequence is that of Adenylosuccinate synthetase from Mycolicibacterium smegmatis (strain ATCC 700084 / mc(2)155) (Mycobacterium smegmatis).